We begin with the raw amino-acid sequence, 138 residues long: Putative pre-16S rRNA nuclease (138 aa).

This sequence belongs to the YqgF nuclease family.

The protein resides in the cytoplasm. Could be a nuclease involved in processing of the 5'-end of pre-16S rRNA. This is Putative pre-16S rRNA nuclease from Escherichia fergusonii (strain ATCC 35469 / DSM 13698 / CCUG 18766 / IAM 14443 / JCM 21226 / LMG 7866 / NBRC 102419 / NCTC 12128 / CDC 0568-73).